The following is a 215-amino-acid chain: LexA repressor (215 aa).

The segment at residues 29-49 is a DNA-binding region (H-T-H motif); that stretch reads VREICSAVGFKSTSTVHSYLQ. Active-site for autocatalytic cleavage activity residues include Ser138 and Lys175.

The protein belongs to the peptidase S24 family. Homodimer.

It catalyses the reaction Hydrolysis of Ala-|-Gly bond in repressor LexA.. Represses a number of genes involved in the response to DNA damage (SOS response), including recA and lexA. In the presence of single-stranded DNA, RecA interacts with LexA causing an autocatalytic cleavage which disrupts the DNA-binding part of LexA, leading to derepression of the SOS regulon and eventually DNA repair. The polypeptide is LexA repressor (Ruminiclostridium cellulolyticum (strain ATCC 35319 / DSM 5812 / JCM 6584 / H10) (Clostridium cellulolyticum)).